Reading from the N-terminus, the 438-residue chain is Trigger factor (438 aa).

The PPIase FKBP-type domain occupies 170–255; it reads GDTVVIDFDG…IHELKKLETP (86 aa).

The protein belongs to the FKBP-type PPIase family. Tig subfamily.

Its subcellular location is the cytoplasm. The catalysed reaction is [protein]-peptidylproline (omega=180) = [protein]-peptidylproline (omega=0). Its function is as follows. Involved in protein export. Acts as a chaperone by maintaining the newly synthesized protein in an open conformation. Functions as a peptidyl-prolyl cis-trans isomerase. The chain is Trigger factor (tig) from Oenococcus oeni (Leuconostoc oenos).